A 453-amino-acid chain; its full sequence is Ribosomal protein uS12 methylthiotransferase RimO (453 aa).

An MTTase N-terminal domain is found at 6–116 (PTVGIVSLGC…VLTAVHEAIA (111 aa)). The [4Fe-4S] cluster site is built by C15, C51, C80, C148, C152, and C155. Positions 134-371 (LTPKHFAYLK…MQLQQQISAN (238 aa)) constitute a Radical SAM core domain. One can recognise a TRAM domain in the interval 374–440 (QAKIGKTIQV…EYDLWATPVG (67 aa)).

It belongs to the methylthiotransferase family. RimO subfamily. It depends on [4Fe-4S] cluster as a cofactor.

It localises to the cytoplasm. The enzyme catalyses L-aspartate(89)-[ribosomal protein uS12]-hydrogen + (sulfur carrier)-SH + AH2 + 2 S-adenosyl-L-methionine = 3-methylsulfanyl-L-aspartate(89)-[ribosomal protein uS12]-hydrogen + (sulfur carrier)-H + 5'-deoxyadenosine + L-methionine + A + S-adenosyl-L-homocysteine + 2 H(+). Functionally, catalyzes the methylthiolation of an aspartic acid residue of ribosomal protein uS12. The protein is Ribosomal protein uS12 methylthiotransferase RimO of Hydrogenovibrio crunogenus (strain DSM 25203 / XCL-2) (Thiomicrospira crunogena).